A 333-amino-acid polypeptide reads, in one-letter code: Anthranilate phosphoribosyltransferase (333 aa).

5-phospho-alpha-D-ribose 1-diphosphate-binding positions include G78, 81 to 82 (GD), T86, 88 to 91 (NVST), 106 to 114 (KHGNYSVSS), and S118. Residue G78 coordinates anthranilate. Position 90 (S90) interacts with Mg(2+). Anthranilate is bound at residue N109. R164 is an anthranilate binding site. Mg(2+)-binding residues include D222 and E223.

The protein belongs to the anthranilate phosphoribosyltransferase family. As to quaternary structure, homodimer. It depends on Mg(2+) as a cofactor.

The enzyme catalyses N-(5-phospho-beta-D-ribosyl)anthranilate + diphosphate = 5-phospho-alpha-D-ribose 1-diphosphate + anthranilate. Its pathway is amino-acid biosynthesis; L-tryptophan biosynthesis; L-tryptophan from chorismate: step 2/5. In terms of biological role, catalyzes the transfer of the phosphoribosyl group of 5-phosphorylribose-1-pyrophosphate (PRPP) to anthranilate to yield N-(5'-phosphoribosyl)-anthranilate (PRA). The polypeptide is Anthranilate phosphoribosyltransferase (Natronomonas pharaonis (strain ATCC 35678 / DSM 2160 / CIP 103997 / JCM 8858 / NBRC 14720 / NCIMB 2260 / Gabara) (Halobacterium pharaonis)).